Consider the following 350-residue polypeptide: Flap endonuclease 1 (350 aa).

The interval 1–102 is N-domain; it reads MGVTELGKLI…IEIEKRRRVR (102 aa). Mg(2+) contacts are provided by D31, D84, E156, E158, D177, D179, and D241. The I-domain stretch occupies residues 120-263; sequence EARKYAQRAL…RALRLIQEYG (144 aa).

The protein belongs to the XPG/RAD2 endonuclease family. FEN1 subfamily. Interacts with PCNA. PCNA stimulates the nuclease activity without altering cleavage specificity. It depends on Mg(2+) as a cofactor.

In terms of biological role, structure-specific nuclease with 5'-flap endonuclease and 5'-3' exonuclease activities involved in DNA replication and repair. During DNA replication, cleaves the 5'-overhanging flap structure that is generated by displacement synthesis when DNA polymerase encounters the 5'-end of a downstream Okazaki fragment. Binds the unpaired 3'-DNA end and kinks the DNA to facilitate 5' cleavage specificity. Cleaves one nucleotide into the double-stranded DNA from the junction in flap DNA, leaving a nick for ligation. Also involved in the base excision repair (BER) pathway. Acts as a genome stabilization factor that prevents flaps from equilibrating into structures that lead to duplications and deletions. Also possesses 5'-3' exonuclease activity on nicked or gapped double-stranded DNA. The protein is Flap endonuclease 1 of Caldivirga maquilingensis (strain ATCC 700844 / DSM 13496 / JCM 10307 / IC-167).